The sequence spans 158 residues: Phosphopantetheine adenylyltransferase (158 aa).

Thr-10 is a substrate binding site. ATP-binding positions include 10-11 and His-18; that span reads TF. Substrate is bound by residues Lys-42, Leu-74, and Arg-88. ATP-binding positions include 89–91, Glu-99, and 124–130; these read GIR and WRYLSST.

Belongs to the bacterial CoaD family. Homohexamer. Mg(2+) serves as cofactor.

The protein localises to the cytoplasm. The enzyme catalyses (R)-4'-phosphopantetheine + ATP + H(+) = 3'-dephospho-CoA + diphosphate. Its pathway is cofactor biosynthesis; coenzyme A biosynthesis; CoA from (R)-pantothenate: step 4/5. Functionally, reversibly transfers an adenylyl group from ATP to 4'-phosphopantetheine, yielding dephospho-CoA (dPCoA) and pyrophosphate. The chain is Phosphopantetheine adenylyltransferase from Actinobacillus pleuropneumoniae serotype 3 (strain JL03).